The primary structure comprises 121 residues: Small ribosomal subunit protein uS13 (121 aa).

The interval 94–121 is disordered; the sequence is GLPVRGQRTRTNARTRKGPRKGAAALKK.

The protein belongs to the universal ribosomal protein uS13 family. In terms of assembly, part of the 30S ribosomal subunit. Forms a loose heterodimer with protein S19. Forms two bridges to the 50S subunit in the 70S ribosome.

Functionally, located at the top of the head of the 30S subunit, it contacts several helices of the 16S rRNA. In the 70S ribosome it contacts the 23S rRNA (bridge B1a) and protein L5 of the 50S subunit (bridge B1b), connecting the 2 subunits; these bridges are implicated in subunit movement. Contacts the tRNAs in the A and P-sites. This is Small ribosomal subunit protein uS13 from Verminephrobacter eiseniae (strain EF01-2).